Reading from the N-terminus, the 173-residue chain is Trafficking regulator of GLUT4 1 (173 aa).

Over residues 1 to 10 (MANPAQPPLQ) the composition is skewed to pro residues. The tract at residues 1-20 (MANPAQPPLQDPGSTSPLEL) is disordered. Topologically, residues 1–102 (MANPAQPPLQ…QDQEAPKDYL (102 aa)) are cytoplasmic. 6 positions are modified to phosphoserine: S16, S43, S45, S70, S84, and S85. The helical intramembrane region spans 103–123 (VLAIASCFCPVWPLNLIPLIF). Over 124-150 (SIMSRSSVQQGDLDGARRLGRLARLLS) the chain is Cytoplasmic. Residues 151–171 (ITFIILGIVIIIVAVTVNFTV) form a helical membrane-spanning segment. The Extracellular segment spans residues 172–173 (PK).

The protein belongs to the CD225/Dispanin family. As to quaternary structure, interacts with SLC2A4; the interaction is required for proper SLC2A4 reacycling after insulin stimulation. Expressed specifically in white and brown adipose tissues.

It is found in the cell membrane. The protein localises to the endomembrane system. The protein resides in the cytoplasm. Its subcellular location is the perinuclear region. Regulates insulin-mediated adipose tissue glucose uptake and transport by modulation of SLC2A4 recycling. Not required for SLC2A4 membrane fusion upon an initial stimulus, but rather is necessary for proper protein recycling during prolonged insulin stimulation. This chain is Trafficking regulator of GLUT4 1 (Trarg1), found in Mus musculus (Mouse).